The sequence spans 81 residues: Photosystem I iron-sulfur center (81 aa).

4Fe-4S ferredoxin-type domains are found at residues 1-31 (MSHTVKIYDTCIGCTQCVRACPTDVLEMVPW) and 37-68 (GQIASSPRTEDCVGCKRCETACPTDFLSIRVY). 8 residues coordinate [4Fe-4S] cluster: Cys11, Cys14, Cys17, Cys21, Cys48, Cys51, Cys54, and Cys58.

The cyanobacterial PSI reaction center is composed of one copy each of PsaA,B,C,D,E,F,I,J,K,L,M and X, and forms trimeric complexes. It depends on [4Fe-4S] cluster as a cofactor.

The protein localises to the cellular thylakoid membrane. It carries out the reaction reduced [plastocyanin] + hnu + oxidized [2Fe-2S]-[ferredoxin] = oxidized [plastocyanin] + reduced [2Fe-2S]-[ferredoxin]. Functionally, apoprotein for the two 4Fe-4S centers FA and FB of photosystem I (PSI); essential for photochemical activity. FB is the terminal electron acceptor of PSI, donating electrons to ferredoxin. The C-terminus interacts with PsaA/B/D and helps assemble the protein into the PSI complex. Required for binding of PsaD and PsaE to PSI. PSI is a plastocyanin/cytochrome c6-ferredoxin oxidoreductase, converting photonic excitation into a charge separation, which transfers an electron from the donor P700 chlorophyll pair to the spectroscopically characterized acceptors A0, A1, FX, FA and FB in turn. The chain is Photosystem I iron-sulfur center from Acaryochloris marina (strain MBIC 11017).